The primary structure comprises 154 residues: Aspartate carbamoyltransferase regulatory chain (154 aa).

Residues C109, C114, C138, and C141 each contribute to the Zn(2+) site.

The protein belongs to the PyrI family. Contains catalytic and regulatory chains. Zn(2+) serves as cofactor.

Involved in allosteric regulation of aspartate carbamoyltransferase. The chain is Aspartate carbamoyltransferase regulatory chain from Pectobacterium carotovorum subsp. carotovorum (strain PC1).